Here is a 552-residue protein sequence, read N- to C-terminus: HTH-type transcriptional regulator SgrR (552 aa).

Residues 1–116 (MPSARLQQQF…LVSHLGRSFR (116 aa)) form the HTH marR-type domain. The H-T-H motif DNA-binding region spans 26-49 (LNELAALLSCSRRHMRTLLNTMQD). Residues 163-492 (ELEADIAHHW…IDWQVDAARW (330 aa)) are solute-binding.

Activates the small RNA gene sgrS under glucose-phosphate stress conditions as well as yfdZ. Represses its own transcription under both stress and non-stress conditions. Might act as a sensor of the intracellular accumulation of phosphoglucose by binding these molecules in its C-terminal solute-binding domain. The sequence is that of HTH-type transcriptional regulator SgrR from Escherichia coli O157:H7.